The following is a 207-amino-acid chain: Small ribosomal subunit protein uS4 (207 aa).

The segment at 32–55 (CKLDSKPGQHGRTSGARTSDYGTQ) is disordered. Polar residues predominate over residues 42–53 (GRTSGARTSDYG). The S4 RNA-binding domain occupies 97 to 158 (SRLDNVVYRM…TKKKQARILE (62 aa)).

This sequence belongs to the universal ribosomal protein uS4 family. Part of the 30S ribosomal subunit. Contacts protein S5. The interaction surface between S4 and S5 is involved in control of translational fidelity.

Functionally, one of the primary rRNA binding proteins, it binds directly to 16S rRNA where it nucleates assembly of the body of the 30S subunit. In terms of biological role, with S5 and S12 plays an important role in translational accuracy. This chain is Small ribosomal subunit protein uS4, found in Paraburkholderia phytofirmans (strain DSM 17436 / LMG 22146 / PsJN) (Burkholderia phytofirmans).